Reading from the N-terminus, the 758-residue chain is 5-methyltetrahydropteroyltriglutamate--homocysteine methyltransferase (758 aa).

5-methyltetrahydropteroyltri-L-glutamate is bound by residues 16–19 (RELK) and Lys-116. L-homocysteine contacts are provided by residues 436-438 (IGS) and Glu-489. L-methionine-binding positions include 436–438 (IGS) and Glu-489. 5-methyltetrahydropteroyltri-L-glutamate is bound by residues 520-521 (RC) and Trp-566. Asp-604 lines the L-homocysteine pocket. Asp-604 is an L-methionine binding site. Residue Glu-610 coordinates 5-methyltetrahydropteroyltri-L-glutamate. His-646, Cys-648, and Glu-670 together coordinate Zn(2+). His-699 functions as the Proton donor in the catalytic mechanism. Residue Cys-731 coordinates Zn(2+).

This sequence belongs to the vitamin-B12 independent methionine synthase family. Requires Zn(2+) as cofactor.

It catalyses the reaction 5-methyltetrahydropteroyltri-L-glutamate + L-homocysteine = tetrahydropteroyltri-L-glutamate + L-methionine. It participates in amino-acid biosynthesis; L-methionine biosynthesis via de novo pathway; L-methionine from L-homocysteine (MetE route): step 1/1. Catalyzes the transfer of a methyl group from 5-methyltetrahydrofolate to homocysteine resulting in methionine formation. The chain is 5-methyltetrahydropteroyltriglutamate--homocysteine methyltransferase from Xylella fastidiosa (strain 9a5c).